A 117-amino-acid polypeptide reads, in one-letter code: Fluoride-specific ion channel FluC 1 (117 aa).

4 consecutive transmembrane segments (helical) span residues 1 to 21 (MIHILFIMVGGGIGAVIRAWL), 35 to 55 (IATLIVNLVGSFLIGFVYGIA), 60 to 80 (LFSLFFITGVLGGLTTFSTLS), and 97 to 117 (FSYSILQFVIGFISCFIGYSI). Residues glycine 71 and threonine 74 each coordinate Na(+).

This sequence belongs to the fluoride channel Fluc/FEX (TC 1.A.43) family.

The protein resides in the cell membrane. The enzyme catalyses fluoride(in) = fluoride(out). Its activity is regulated as follows. Na(+) is not transported, but it plays an essential structural role and its presence is essential for fluoride channel function. Fluoride-specific ion channel. Important for reducing fluoride concentration in the cell, thus reducing its toxicity. The protein is Fluoride-specific ion channel FluC 1 of Staphylococcus haemolyticus (strain JCSC1435).